A 359-amino-acid polypeptide reads, in one-letter code: Tropomodulin-1 (359 aa).

Residues 36–61 are disordered; it reads ELDPDNALLPAGLRQKDQTTKAPTGP. Residues 39-138 are tropomyosin-binding; the sequence is PDNALLPAGL…CDIAAILGMH (100 aa).

It belongs to the tropomodulin family. Binds to the N-terminus of tropomyosin and to actin. Interacts with FLII.

The protein localises to the cytoplasm. The protein resides in the cytoskeleton. Its function is as follows. Blocks the elongation and depolymerization of the actin filaments at the pointed end. The Tmod/TM complex contributes to the formation of the short actin protofilament, which in turn defines the geometry of the membrane skeleton. The sequence is that of Tropomodulin-1 (Tmod1) from Rattus norvegicus (Rat).